A 485-amino-acid polypeptide reads, in one-letter code: CCA-adding enzyme (485 aa).

Ser-53 and Arg-56 together coordinate ATP. CTP-binding residues include Ser-53 and Arg-56. Residues Asp-65, Asp-67, and Asp-124 each contribute to the Mg(2+) site. The ATP site is built by His-146, Lys-164, and Tyr-173. 3 residues coordinate CTP: His-146, Lys-164, and Tyr-173.

This sequence belongs to the tRNA nucleotidyltransferase/poly(A) polymerase family. Archaeal CCA-adding enzyme subfamily. In terms of assembly, homodimer. It depends on Mg(2+) as a cofactor.

The enzyme catalyses a tRNA precursor + 2 CTP + ATP = a tRNA with a 3' CCA end + 3 diphosphate. It carries out the reaction a tRNA with a 3' CCA end + 2 CTP + ATP = a tRNA with a 3' CCACCA end + 3 diphosphate. Catalyzes the addition and repair of the essential 3'-terminal CCA sequence in tRNAs without using a nucleic acid template. Adds these three nucleotides in the order of C, C, and A to the tRNA nucleotide-73, using CTP and ATP as substrates and producing inorganic pyrophosphate. tRNA 3'-terminal CCA addition is required both for tRNA processing and repair. Also involved in tRNA surveillance by mediating tandem CCA addition to generate a CCACCA at the 3' terminus of unstable tRNAs. While stable tRNAs receive only 3'-terminal CCA, unstable tRNAs are marked with CCACCA and rapidly degraded. The chain is CCA-adding enzyme from Methanopyrus kandleri (strain AV19 / DSM 6324 / JCM 9639 / NBRC 100938).